The chain runs to 316 residues: Methionyl-tRNA formyltransferase (316 aa).

Residue 112-115 (SLLP) participates in (6S)-5,6,7,8-tetrahydrofolate binding.

This sequence belongs to the Fmt family.

It catalyses the reaction L-methionyl-tRNA(fMet) + (6R)-10-formyltetrahydrofolate = N-formyl-L-methionyl-tRNA(fMet) + (6S)-5,6,7,8-tetrahydrofolate + H(+). Its function is as follows. Attaches a formyl group to the free amino group of methionyl-tRNA(fMet). The formyl group appears to play a dual role in the initiator identity of N-formylmethionyl-tRNA by promoting its recognition by IF2 and preventing the misappropriation of this tRNA by the elongation apparatus. The protein is Methionyl-tRNA formyltransferase of Haemophilus ducreyi (strain 35000HP / ATCC 700724).